The chain runs to 380 residues: Putative 12-oxophytodienoate reductase 4 (380 aa).

Residues 36 to 38, Ala69, and Gln111 contribute to the FMN site; that span reads PLT. 183–186 lines the substrate pocket; the sequence is HGAH. The Proton donor role is filled by Tyr188. Residue Arg235 coordinates FMN. Arg276 is a substrate binding site. Residues Gly306 and 327–328 contribute to the FMN site; that span reads GR.

The protein belongs to the NADH:flavin oxidoreductase/NADH oxidase family. FMN is required as a cofactor.

Putative oxophytodienoate reductase that may be involved in the biosynthesis or metabolism of oxylipin signaling molecules. The polypeptide is Putative 12-oxophytodienoate reductase 4 (OPR4) (Oryza sativa subsp. japonica (Rice)).